We begin with the raw amino-acid sequence, 199 residues long: Thymidylate kinase (199 aa).

7–14 (GIDGSGKS) is a binding site for ATP.

This sequence belongs to the thymidylate kinase family.

The catalysed reaction is dTMP + ATP = dTDP + ADP. Functionally, phosphorylation of dTMP to form dTDP in both de novo and salvage pathways of dTTP synthesis. In Neorickettsia sennetsu (strain ATCC VR-367 / Miyayama) (Ehrlichia sennetsu), this protein is Thymidylate kinase.